The chain runs to 554 residues: Probable efflux pump gsfJ (554 aa).

14 helical membrane-spanning segments follow: residues 54-74 (LAAV…DNTI), 93-115 (SWYG…GKFY), 120-140 (IKVW…ICAV), 152-172 (AIAG…IGFA), 181-201 (LLGF…LIGG), 206-226 (KCFY…FLLF), 248-268 (LVGA…LQYG), 279-299 (VIGL…WEIY), 321-341 (IYMF…PIYF), 349-369 (PIGS…AAIV), 379-399 (IVPL…GLFY), 410-430 (WVGY…IAMS), 447-467 (IVNF…QCAF), and 518-538 (VFAI…FGSW).

Belongs to the major facilitator superfamily.

It localises to the membrane. Functionally, probable efflux pump; part of the gene cluster that mediates the biosynthesis of griseofulvin. The sequence is that of Probable efflux pump gsfJ from Penicillium aethiopicum.